A 308-amino-acid chain; its full sequence is MTEPQTNRTSGAKIIDGKAFAADVRGQVAGHVQRLKDEHGITPGLAVVLVGEDPASEVYVSHKHKATVEVGMTSFEHKLPADTSEDDLFALIDKLNADPAVHGILCQFPVPDHLDERRTVARISPAKDVDGLSVTNAGLLSSGGEALVSCTPLGCLMLLRAEFDSLSGKDAVVIGRSNLFGKPMAQLLLGDNCTVTIAHSRTKDLADVCRRADILVAAVGRAEMVRGDWIKPGATVIDVGISRVPHPDKPGKTKLIGDVHFAEAVDVAGAITPVPGGVGPMTIACLLANTVTACCRAHGLDEPRGLTA.

NADP(+)-binding positions include 175-177 (GRS), Ser-200, and Ile-241.

This sequence belongs to the tetrahydrofolate dehydrogenase/cyclohydrolase family. Homodimer.

The catalysed reaction is (6R)-5,10-methylene-5,6,7,8-tetrahydrofolate + NADP(+) = (6R)-5,10-methenyltetrahydrofolate + NADPH. It catalyses the reaction (6R)-5,10-methenyltetrahydrofolate + H2O = (6R)-10-formyltetrahydrofolate + H(+). Its pathway is one-carbon metabolism; tetrahydrofolate interconversion. Functionally, catalyzes the oxidation of 5,10-methylenetetrahydrofolate to 5,10-methenyltetrahydrofolate and then the hydrolysis of 5,10-methenyltetrahydrofolate to 10-formyltetrahydrofolate. The chain is Bifunctional protein FolD from Jannaschia sp. (strain CCS1).